An 803-amino-acid polypeptide reads, in one-letter code: Mechanosensitive cation channel TMEM63A (803 aa).

Residues 1 to 51 (MTDSPFLELWQSRTVAIRERLGIGDQPNDSYCYNSAKNSTVLQGVTFGGIP) are Extracellular-facing. The helical transmembrane segment at 52–74 (TVLFIDVSCFLFLIVVFSIIRRK) threads the bilayer. Residues 75 to 133 (FWDYGRIALVSEGNSESRFRRLSSSSSGQQDFESELGCCSWLTAIFRLHDDQILEWCGE) are Cytoplasmic-facing. The chain crosses the membrane as a helical span at residues 134–166 (DAIHYLSFQRHIIFLLVVVSCLSLCIILPVNLS). At 167-190 (GDLLDKDPYSFGRTTIANLQTDNN) the chain is on the extracellular side. Residues 191 to 216 (LLWLHTIFAILYLILTVVFMRHHTQS) form a helical membrane-spanning segment. At 217–415 (IKYKEESLVR…CWKNLSIQGF (199 aa)) the chain is on the cytoplasmic side. Residues 218 to 413 (KYKEESLVRR…DICWKNLSIQ (196 aa)) are intracellular linker IL2; confers mechanosensitivity. Residues 416–443 (RWWFQWLGINFILFVGLFFLTTPSIILS) traverse the membrane as a helical segment. Over 444–461 (TMDKFNVTKPIHALNDPI) the chain is Extracellular. A helical membrane pass occupies residues 462–489 (ISQFFPTLLLWSFSALLPTIVCYSTLLE). At 490 to 494 (SHWTK) the chain is on the cytoplasmic side. A helical membrane pass occupies residues 495–531 (SGENRIMMTKVYIFLIFMVLILPSLGLTSLDFFFRWL). The Extracellular segment spans residues 532-553 (FDKTSSEASIRLECVFLPDQGA). Residues 554–585 (FFVNYVIASAFIGNGMELLRLPGLILYTFRMV) traverse the membrane as a helical segment. A gating helix region spans residues 554–585 (FFVNYVIASAFIGNGMELLRLPGLILYTFRMV). Topologically, residues 586–605 (MAKTAADRRNVKQHQAFEYE) are cytoplasmic. The chain crosses the membrane as a helical span at residues 606-623 (FGAMYAWMLCVFTVIMAY). The Extracellular portion of the chain corresponds to 624 to 627 (SITC). The chain crosses the membrane as a helical span at residues 628-650 (PIIVPFGLIYILLKHMVDRHNLY). Over 651–660 (FAYLPAKLEK) the chain is Cytoplasmic. A helical membrane pass occupies residues 661 to 688 (RIHFAAVNQALAAPILCLFWLYFFSFLR). Topologically, residues 689 to 693 (LGLKA) are extracellular. The helical transmembrane segment at 694–708 (PLTLFTFLVLLLTIL) threads the bilayer. At 709–803 (VCLAYTCFGC…DSVAAADQED (95 aa)) the chain is on the cytoplasmic side.

Belongs to the CSC1 (TC 1.A.17) family. As to quaternary structure, (Microbial infection) Interacts with H.contortus GAL-1 (via domain galectin 1).

It localises to the lysosome membrane. Its subcellular location is the early endosome membrane. It is found in the cell membrane. The catalysed reaction is Ca(2+)(in) = Ca(2+)(out). In terms of biological role, mechanosensitive cation channel with low conductance and high activation threshold. In contrast to TMEM63B, does not show phospholipid scramblase activity. Acts as a regulator of lysosomal morphology by mediating lysosomal mechanosensitivity. Important for the baby's first breath and respiration throughout life. Upon lung inflation conducts cation currents in alveolar type 1 and 2 cells triggering lamellar body exocytosis and surfactant secretion into airspace. Also acts as an osmosensitive cation channel preferentially activated by hypotonic stress. (Microbial infection) Involved in the immunomodulatory effects exerted by H.contortus GAL-1 on host peripheral blood mononuclear cells to down-regulate host immune response. The chain is Mechanosensitive cation channel TMEM63A (TMEM63A) from Capra hircus (Goat).